The sequence spans 511 residues: Arabinose import ATP-binding protein AraG (511 aa).

ABC transporter domains are found at residues 5–240 and 240–501; these read LEFR…MVGR and RQID…LRPR. An ATP-binding site is contributed by 37 to 44; sequence GENGAGKS.

Belongs to the ABC transporter superfamily. Arabinose importer (TC 3.A.1.2.2) family. The complex is composed of two ATP-binding proteins (AraG), two transmembrane proteins (AraH) and a solute-binding protein (AraF).

It localises to the cell inner membrane. It carries out the reaction L-arabinose(out) + ATP + H2O = L-arabinose(in) + ADP + phosphate + H(+). Its function is as follows. Part of the ABC transporter complex AraFGH involved in arabinose import. Responsible for energy coupling to the transport system. The protein is Arabinose import ATP-binding protein AraG of Ralstonia nicotianae (strain ATCC BAA-1114 / GMI1000) (Ralstonia solanacearum).